The sequence spans 569 residues: Sulfite reductase [NADPH] hemoprotein beta-component (569 aa).

The [4Fe-4S] cluster site is built by Cys433, Cys439, Cys478, and Cys482. Cys482 contributes to the siroheme binding site.

Belongs to the nitrite and sulfite reductase 4Fe-4S domain family. Alpha(8)-beta(8). The alpha component is a flavoprotein, the beta component is a hemoprotein. Siroheme serves as cofactor. It depends on [4Fe-4S] cluster as a cofactor.

The catalysed reaction is hydrogen sulfide + 3 NADP(+) + 3 H2O = sulfite + 3 NADPH + 4 H(+). It functions in the pathway sulfur metabolism; hydrogen sulfide biosynthesis; hydrogen sulfide from sulfite (NADPH route): step 1/1. Functionally, component of the sulfite reductase complex that catalyzes the 6-electron reduction of sulfite to sulfide. This is one of several activities required for the biosynthesis of L-cysteine from sulfate. This Pseudoalteromonas atlantica (strain T6c / ATCC BAA-1087) protein is Sulfite reductase [NADPH] hemoprotein beta-component.